We begin with the raw amino-acid sequence, 511 residues long: Cytochrome P450 93B2 (511 aa).

A helical membrane pass occupies residues 4-24 (LQLIFLLFFFPTLLFLYCLPY). Residue C447 coordinates heme.

The protein belongs to the cytochrome P450 family. Requires heme as cofactor.

Its subcellular location is the membrane. It carries out the reaction a flavanone + reduced [NADPH--hemoprotein reductase] + O2 = a flavone + oxidized [NADPH--hemoprotein reductase] + 2 H2O + H(+). The protein operates within secondary metabolite biosynthesis; flavonoid biosynthesis. In terms of biological role, functions as a flavone synthase II (FNSII) that catalyzes the direct conversion of flavanones to flavones. In vitro, can convert liquiritigenin, naringenin and eriodictyol to 7,4'-dihydroxyflavone, apigenin and luteolin, respectively. This chain is Cytochrome P450 93B2, found in Gerbera hybrida (Daisy).